Here is a 1191-residue protein sequence, read N- to C-terminus: Rho GTPase-activating protein 20 (1191 aa).

Over residues 1 to 23 the composition is skewed to polar residues; sequence MEAMSPQQETLGGQPGRSSSLTG. The tract at residues 1–45 is disordered; sequence MEAMSPQQETLGGQPGRSSSLTGVSRLAGGSCTKKKMKTLAERRR. Residue Ser-46 is modified to Phosphoserine. The region spanning 78–180 is the PH domain; it reads SLVCSNRTLL…EQKDKWLSLL (103 aa). The Ras-associating domain maps to 194 to 295; the sequence is KSIPLKIFAK…TPFNLQEPFL (102 aa). The Rho-GAP domain occupies 365-551; the sequence is ISLPNICEND…FLIENCLRIF (187 aa). A phosphoserine mark is found at Ser-704 and Ser-730. Disordered stretches follow at residues 768–791, 926–1014, 1052–1123, and 1140–1191; these read SKKN…NHVK, RLNL…SRPA, KKAK…RHCS, and HEEI…TKDI. Residues 934–961 show a composition bias toward low complexity; it reads SYSSLSSPGTSPSGSSVSSQDSAFSQIS. 2 stretches are compositionally biased toward polar residues: residues 962-981 and 1103-1116; these read EHSV…TFQA and PVQS…SPFQ. Positions 1182 to 1191 are enriched in basic and acidic residues; it reads IEDRYLTKDI.

Expressed predominantly in the brain. Lower expression is found in lymph nodes.

In terms of biological role, GTPase activator for the Rho-type GTPases by converting them to an inactive GDP-bound state. The protein is Rho GTPase-activating protein 20 (ARHGAP20) of Homo sapiens (Human).